The primary structure comprises 414 residues: MSQNKRVVITGMGALSPIGNDVKTTWENALKGVNGIDKITRIDTEPYSVHLAGELKNFNIEDHIDKKEARRMDRFTQYAIVAAREAVKDAQLDINDNTADRIGVWIGSGIGGMETFEIAHKQLMDKGPRRVSPFFVPMLIPDMATGQVSIDLGAKGPNGATVTACATGTNSIGEAFKIVQRGDADAMITGGTEAPITHMAIAGFSASRALSTNDDIETACRPFQEGRDGFVMGEGAGILVIESLESAQARGANIYAEIVGYGTTGDAYHITAPAPEGEGGSRAMQAAMDDAGIEPKDVQYLNAHGTSTPVGDLNEVKAIKNTFGEAAKHLKVSSTKSMTGHLLGATGGIEAIFSALSIKDSKVAPTIHAVTPDPECDLDIVPNEAQDLDITYAMSNSLGFGGHNAVLVFKKFEA.

One can recognise a Ketosynthase family 3 (KS3) domain in the interval N4–K411. Active-site for beta-ketoacyl synthase activity residues include C165, H304, and H341.

Belongs to the thiolase-like superfamily. Beta-ketoacyl-ACP synthases family.

It catalyses the reaction a fatty acyl-[ACP] + malonyl-[ACP] + H(+) = a 3-oxoacyl-[ACP] + holo-[ACP] + CO2. The enzyme catalyses (9Z)-hexadecenoyl-[ACP] + malonyl-[ACP] + H(+) = 3-oxo-(11Z)-octadecenoyl-[ACP] + holo-[ACP] + CO2. The protein operates within lipid metabolism; fatty acid biosynthesis. In terms of biological role, involved in the type II fatty acid elongation cycle. Catalyzes the elongation of a wide range of acyl-ACP by the addition of two carbons from malonyl-ACP to an acyl acceptor. Can efficiently catalyze the conversion of palmitoleoyl-ACP (cis-hexadec-9-enoyl-ACP) to cis-vaccenoyl-ACP (cis-octadec-11-enoyl-ACP), an essential step in the thermal regulation of fatty acid composition. This Staphylococcus aureus (strain Mu50 / ATCC 700699) protein is 3-oxoacyl-[acyl-carrier-protein] synthase 2 (fabF).